Consider the following 609-residue polypeptide: Pescadillo homolog (609 aa).

A BRCT domain is found at 320–413 (KLKNLFKGLK…KLLPTNKYFI (94 aa)). Disordered regions lie at residues 443–462 (DEFEKQERAEGISDDEDEDF) and 488–609 (ALNS…EILA). Basic and acidic residues-rich tracts occupy residues 444–453 (EFEKQERAEG) and 488–498 (ALNSGEAKKEQ). A coiled-coil region spans residues 481–509 (FREEKAEALNSGEAKKEQAEEDNEDDDQE). Residues 499–512 (AEEDNEDDDQEPDQ) show a composition bias toward acidic residues. 2 stretches are compositionally biased toward basic and acidic residues: residues 513-524 (DETKKQRSEKKQ) and 533-552 (VFKENPKEQKQLTKQEEALR). A coiled-coil region spans residues 539–607 (KEQKQLTKQE…QKRKAQRKEI (69 aa)). The segment covering 554–564 (KMVKSRHKKLY) has biased composition (basic residues). Over residues 567–609 (LLDKQKKATKEANLLREKRQQIDKQKRKEQTQKRKAQRKEILA) the composition is skewed to basic and acidic residues.

It belongs to the pescadillo family.

The protein resides in the nucleus. It is found in the nucleolus. The protein localises to the nucleoplasm. Its function is as follows. Required for maturation of ribosomal RNAs and formation of the large ribosomal subunit. The sequence is that of Pescadillo homolog from Aedes aegypti (Yellowfever mosquito).